The following is a 173-amino-acid chain: MAKRRKTSREKKEDTNWQERVIQIRRVSKVVKGGKKLSFRAIVVVGNETGQVGVGVGKAGDVIGAVRKGVADGKKQLIEVPLTKSNSITHITNGVSGGAKVVVRPAAPGTGVIAGGAVRTVLELAGVKNILAKQLGSNNPLNNARAAINALETLRTFSEVAEERGVSVEHLYT.

The S5 DRBM domain maps to 17–80 (WQERVIQIRR…ADGKKQLIEV (64 aa)).

This sequence belongs to the universal ribosomal protein uS5 family. As to quaternary structure, part of the 30S ribosomal subunit. Contacts proteins S4 and S8.

Its function is as follows. With S4 and S12 plays an important role in translational accuracy. In terms of biological role, located at the back of the 30S subunit body where it stabilizes the conformation of the head with respect to the body. The protein is Small ribosomal subunit protein uS5 of Synechocystis sp. (strain ATCC 27184 / PCC 6803 / Kazusa).